The chain runs to 105 residues: Protein ORFg in retron Ec67 (105 aa).

This Escherichia coli protein is Protein ORFg in retron Ec67.